An 802-amino-acid chain; its full sequence is ATP-dependent zinc metalloprotease FTSH 7, chloroplastic (802 aa).

A chloroplast-targeting transit peptide spans 1 to 55; that stretch reads MTTTFEFLQPRIHGFATCCSSNSLLYSKASRFFNDRCRVYRQNPNRFVSNSITLP. Residues 87–117 form a disordered region; sequence CQEDDQNESSSEEEESSQSTPAKSERKREKK. Over residues 88-102 the composition is skewed to acidic residues; that stretch reads QEDDQNESSSEEEES. 2 helical membrane passes run 134 to 154 and 268 to 288; these read IIQA…MFVM and GGFF…AGLI. 365–372 contacts ATP; it reads GLPGTGKT. His-590 is a Zn(2+) binding site. Glu-591 is an active-site residue. Zn(2+) contacts are provided by His-594 and Asp-673.

The protein in the N-terminal section; belongs to the AAA ATPase family. This sequence in the C-terminal section; belongs to the peptidase M41 family. It depends on Zn(2+) as a cofactor.

The protein resides in the plastid. It localises to the chloroplast thylakoid membrane. In terms of biological role, probable ATP-dependent zinc metallopeptidase. The protein is ATP-dependent zinc metalloprotease FTSH 7, chloroplastic (FTSH7) of Arabidopsis thaliana (Mouse-ear cress).